Consider the following 603-residue polypeptide: UvrABC system protein C (603 aa).

The 78-residue stretch at 15–92 (DQPGCYLMKD…IKKHDPRFNI (78 aa)) folds into the GIY-YIG domain. One can recognise a UVR domain in the interval 197-232 (KTVKNDLMKKMQEAAENMEFEKAGEFRDQINAIETT).

Belongs to the UvrC family. In terms of assembly, interacts with UvrB in an incision complex.

It is found in the cytoplasm. Functionally, the UvrABC repair system catalyzes the recognition and processing of DNA lesions. UvrC both incises the 5' and 3' sides of the lesion. The N-terminal half is responsible for the 3' incision and the C-terminal half is responsible for the 5' incision. This is UvrABC system protein C from Listeria monocytogenes serotype 4b (strain F2365).